The primary structure comprises 266 residues: Glucosamine-6-phosphate deaminase (266 aa).

The Proton acceptor; for enolization step role is filled by aspartate 72. Aspartate 141 acts as the For ring-opening step in catalysis. The Proton acceptor; for ring-opening step role is filled by histidine 143. Glutamate 148 functions as the For ring-opening step in the catalytic mechanism.

The protein belongs to the glucosamine/galactosamine-6-phosphate isomerase family. NagB subfamily. Homohexamer.

The catalysed reaction is alpha-D-glucosamine 6-phosphate + H2O = beta-D-fructose 6-phosphate + NH4(+). It functions in the pathway amino-sugar metabolism; N-acetylneuraminate degradation; D-fructose 6-phosphate from N-acetylneuraminate: step 5/5. With respect to regulation, allosterically activated by N-acetylglucosamine 6-phosphate (GlcNAc6P). Catalyzes the reversible isomerization-deamination of glucosamine 6-phosphate (GlcN6P) to form fructose 6-phosphate (Fru6P) and ammonium ion. This Citrobacter koseri (strain ATCC BAA-895 / CDC 4225-83 / SGSC4696) protein is Glucosamine-6-phosphate deaminase.